Reading from the N-terminus, the 159-residue chain is Transcriptional repressor NrdR (159 aa).

The disordered stretch occupies residues 1–26 (MRCPFCAHDNSQVKDSRPSEDNTSIR). The segment at 3–34 (CPFCAHDNSQVKDSRPSEDNTSIRRRRQCEGC) is a zinc-finger region. Residues 11-24 (SQVKDSRPSEDNTS) show a composition bias toward basic and acidic residues. The 91-residue stretch at 49–139 (VVVVKSGERR…VYRDFTEARD (91 aa)) folds into the ATP-cone domain.

This sequence belongs to the NrdR family. Requires Zn(2+) as cofactor.

Functionally, negatively regulates transcription of bacterial ribonucleotide reductase nrd genes and operons by binding to NrdR-boxes. The protein is Transcriptional repressor NrdR of Novosphingobium aromaticivorans (strain ATCC 700278 / DSM 12444 / CCUG 56034 / CIP 105152 / NBRC 16084 / F199).